Consider the following 39-residue polypeptide: Cytochrome b6-f complex subunit 5 (39 aa).

Residues 5–25 form a helical membrane-spanning segment; the sequence is LLCGIVLGLVPITIVGLFVSA.

It belongs to the PetG family. The 4 large subunits of the cytochrome b6-f complex are cytochrome b6, subunit IV (17 kDa polypeptide, PetD), cytochrome f and the Rieske protein, while the 4 small subunits are PetG, PetL, PetM and PetN. The complex functions as a dimer.

It is found in the cellular thylakoid membrane. Component of the cytochrome b6-f complex, which mediates electron transfer between photosystem II (PSII) and photosystem I (PSI), cyclic electron flow around PSI, and state transitions. PetG is required for either the stability or assembly of the cytochrome b6-f complex. This chain is Cytochrome b6-f complex subunit 5, found in Prochlorococcus marinus (strain MIT 9211).